A 474-amino-acid polypeptide reads, in one-letter code: MGATEVLTSYCVVLCLLQMVALSSGHFTVIGSQRPILATLGGNVELNCQLSPPQQAQHMEIRWFRNRYTQPVHLYRNGKNLHGETMSKYVERTELLTDAFNEGKVILRILNVTVDDGGAYHCVFKDGEFYEEHITEVKVTATSSDIQILMHTPNIKGVMLECHSGGWFPQPHMEWRNSKGEVIQATSKFHSQDKNKLFNMSMVLFIEASSHRNVICYFQNLVTHQEQSINIVLSGELFSWKIVWIMILSTISFVMIDFCMTYCVQQQLIHEESLSTVDNDQCESDQSEGTCYKRNYPWIIIAVVPIISVFAIIGVMLFLHLEQRVTILEQHFELDTLWLEDISVILCVVIVSNINLIPLIYFRLHEHVPRFKDRSPILNKAVVFLHFIYFSIVCGTILLVHLQLRNKVSISDSLFSLYNSWLTDISMILGFLLSIFIVTTIAKSSLFNKKWCIGLCIHMKEAEATGGPCEGEEL.

An N-terminal signal peptide occupies residues 1 to 25; the sequence is MGATEVLTSYCVVLCLLQMVALSSG. The Extracellular segment spans residues 26-241; it reads HFTVIGSQRP…VLSGELFSWK (216 aa). Residues 27–140 form the Ig-like V-type domain; it reads FTVIGSQRPI…EEHITEVKVT (114 aa). Disulfide bonds link C48/C122 and C162/C216. N111 and N199 each carry an N-linked (GlcNAc...) asparagine glycan. The Ig-like C1-type domain occupies 141–234; it reads ATSSDIQILM…QEQSINIVLS (94 aa). The helical transmembrane segment at 242–262 threads the bilayer; it reads IVWIMILSTISFVMIDFCMTY. At 263–298 the chain is on the cytoplasmic side; that stretch reads CVQQQLIHEESLSTVDNDQCESDQSEGTCYKRNYPW. A helical membrane pass occupies residues 299–319; sequence IIIAVVPIISVFAIIGVMLFL. Topologically, residues 320–341 are extracellular; that stretch reads HLEQRVTILEQHFELDTLWLED. A helical transmembrane segment spans residues 342-362; it reads ISVILCVVIVSNINLIPLIYF. At 363–381 the chain is on the cytoplasmic side; sequence RLHEHVPRFKDRSPILNKA. The chain crosses the membrane as a helical span at residues 382–402; it reads VVFLHFIYFSIVCGTILLVHL. At 403-420 the chain is on the extracellular side; that stretch reads QLRNKVSISDSLFSLYNS. Residues 421-441 traverse the membrane as a helical segment; the sequence is WLTDISMILGFLLSIFIVTTI. The Cytoplasmic portion of the chain corresponds to 442–474; sequence AKSSLFNKKWCIGLCIHMKEAEATGGPCEGEEL.

This sequence belongs to the SKINT family. As to expression, expressed in skin, thymus and, to a lower extent, bladder and testis.

The protein localises to the membrane. Functionally, may act by engaging a cell surface molecule on immature T-cells in the embryonic thymus. The polypeptide is Selection and upkeep of intraepithelial T-cells protein 4 (Skint4) (Mus musculus (Mouse)).